The following is a 90-amino-acid chain: Small ribosomal subunit protein bS16 (90 aa).

Belongs to the bacterial ribosomal protein bS16 family.

This Streptococcus pneumoniae serotype 19F (strain G54) protein is Small ribosomal subunit protein bS16.